Consider the following 162-residue polypeptide: Lipoprotein signal peptidase (162 aa).

2 consecutive transmembrane segments (helical) span residues 56 to 76 and 84 to 104; these read FLPPTGLLFLTLAISAGVVWY and SPLFLTAFGLILGGGIGNLID. Active-site residues include Asp113 and Asp139. Residues 132–152 form a helical membrane-spanning segment; that stretch reads WPIFNVADSCITIGACMIVLF.

Belongs to the peptidase A8 family.

It localises to the cell inner membrane. The enzyme catalyses Release of signal peptides from bacterial membrane prolipoproteins. Hydrolyzes -Xaa-Yaa-Zaa-|-(S,diacylglyceryl)Cys-, in which Xaa is hydrophobic (preferably Leu), and Yaa (Ala or Ser) and Zaa (Gly or Ala) have small, neutral side chains.. It participates in protein modification; lipoprotein biosynthesis (signal peptide cleavage). Its function is as follows. This protein specifically catalyzes the removal of signal peptides from prolipoproteins. The chain is Lipoprotein signal peptidase from Chlorobaculum tepidum (strain ATCC 49652 / DSM 12025 / NBRC 103806 / TLS) (Chlorobium tepidum).